Consider the following 535-residue polypeptide: Ribonuclease Y (535 aa).

A helical membrane pass occupies residues 4–24; it reads IILLIVSALIGLILGYALISI. A disordered region spans residues 118 to 141; the sequence is ENLSSKEKVLDSKEQSLTDKSKHI. The region spanning 225–285 is the KH domain; it reads TITSVHLPDD…IRREIARMTL (61 aa). One can recognise an HD domain in the interval 351–444; the sequence is VLRHSVEVGK…VAAADALSSA (94 aa).

This sequence belongs to the RNase Y family.

Its subcellular location is the cell membrane. In terms of biological role, endoribonuclease that initiates mRNA decay. The chain is Ribonuclease Y from Streptococcus pyogenes serotype M2 (strain MGAS10270).